The sequence spans 299 residues: tRNA dimethylallyltransferase (299 aa).

Residue 13–20 (GPTASGKT) participates in ATP binding. 15–20 (TASGKT) is a substrate binding site. Positions 38–41 (DSRQ) are interaction with substrate tRNA.

The protein belongs to the IPP transferase family. As to quaternary structure, monomer. It depends on Mg(2+) as a cofactor.

It catalyses the reaction adenosine(37) in tRNA + dimethylallyl diphosphate = N(6)-dimethylallyladenosine(37) in tRNA + diphosphate. Catalyzes the transfer of a dimethylallyl group onto the adenine at position 37 in tRNAs that read codons beginning with uridine, leading to the formation of N6-(dimethylallyl)adenosine (i(6)A). The polypeptide is tRNA dimethylallyltransferase (Prochlorococcus marinus (strain MIT 9301)).